Consider the following 61-residue polypeptide: Conotoxin Tx-D021 (61 aa).

Residues Met-1–Ala-22 form the signal peptide. Residues Arg-23 to Asp-48 constitute a propeptide that is removed on maturation. Cys-60 carries the post-translational modification Cysteine amide.

Belongs to the conotoxin T superfamily. Post-translationally, contains 2 disulfide bonds that can be either 'C1-C3, C2-C4' or 'C1-C4, C2-C3', since these disulfide connectivities have been observed for conotoxins with cysteine framework V (for examples, see AC P0DQQ7 and AC P81755). Expressed by the venom duct.

It localises to the secreted. The polypeptide is Conotoxin Tx-D021 (Conus textile (Cloth-of-gold cone)).